We begin with the raw amino-acid sequence, 209 residues long: Superoxide dismutase [Mn/Fe] (209 aa).

Residues His-38, His-90, Asp-172, and His-176 each contribute to the Fe(3+) site. Positions 38, 90, 172, and 176 each coordinate Mn(2+).

Belongs to the iron/manganese superoxide dismutase family. Requires Mn(2+) as cofactor. The cofactor is Fe(3+).

It catalyses the reaction 2 superoxide + 2 H(+) = H2O2 + O2. Functionally, destroys superoxide anion radicals which are normally produced within the cells and which are toxic to biological systems. Catalyzes the dismutation of superoxide anion radicals into O2 and H2O2 by successive reduction and oxidation of the transition metal ion at the active site. The chain is Superoxide dismutase [Mn/Fe] (sodB) from Rickettsia bellii (strain RML369-C).